Reading from the N-terminus, the 163-residue chain is Phosphopantetheine adenylyltransferase (163 aa).

Thr10 lines the substrate pocket. Residues 10 to 11 (TF) and His18 each bind ATP. Substrate-binding residues include Lys42, Leu74, and Arg88. ATP is bound by residues 89–91 (GLR), Glu99, and 124–130 (NSFISST).

Belongs to the bacterial CoaD family. As to quaternary structure, homohexamer. The cofactor is Mg(2+).

The protein localises to the cytoplasm. The catalysed reaction is (R)-4'-phosphopantetheine + ATP + H(+) = 3'-dephospho-CoA + diphosphate. It participates in cofactor biosynthesis; coenzyme A biosynthesis; CoA from (R)-pantothenate: step 4/5. Functionally, reversibly transfers an adenylyl group from ATP to 4'-phosphopantetheine, yielding dephospho-CoA (dPCoA) and pyrophosphate. This is Phosphopantetheine adenylyltransferase from Shewanella baltica (strain OS155 / ATCC BAA-1091).